Consider the following 128-residue polypeptide: Small ribosomal subunit protein uS11 (128 aa).

The protein belongs to the universal ribosomal protein uS11 family. As to quaternary structure, part of the 30S ribosomal subunit. Interacts with proteins S7 and S18. Binds to IF-3.

Located on the platform of the 30S subunit, it bridges several disparate RNA helices of the 16S rRNA. Forms part of the Shine-Dalgarno cleft in the 70S ribosome. In Wolbachia sp. subsp. Drosophila simulans (strain wRi), this protein is Small ribosomal subunit protein uS11.